The following is a 389-amino-acid chain: Probable dual-specificity RNA methyltransferase RlmN (389 aa).

Glu-114 serves as the catalytic Proton acceptor. The 239-residue stretch at 120–358 (QHYGLSVCVT…CVVRQEHGTD (239 aa)) folds into the Radical SAM core domain. Residues Cys-127 and Cys-363 are joined by a disulfide bond. [4Fe-4S] cluster contacts are provided by Cys-134, Cys-138, and Cys-141. S-adenosyl-L-methionine-binding positions include 186 to 187 (GE), Ser-218, 241 to 243 (SLH), and Asn-319. Cys-363 acts as the S-methylcysteine intermediate in catalysis. Positions 370–389 (TMKRDRQKAVAEASGKSEGK) are disordered. Basic and acidic residues predominate over residues 371-389 (MKRDRQKAVAEASGKSEGK).

It belongs to the radical SAM superfamily. RlmN family. The cofactor is [4Fe-4S] cluster.

It localises to the cytoplasm. The catalysed reaction is adenosine(2503) in 23S rRNA + 2 reduced [2Fe-2S]-[ferredoxin] + 2 S-adenosyl-L-methionine = 2-methyladenosine(2503) in 23S rRNA + 5'-deoxyadenosine + L-methionine + 2 oxidized [2Fe-2S]-[ferredoxin] + S-adenosyl-L-homocysteine. It carries out the reaction adenosine(37) in tRNA + 2 reduced [2Fe-2S]-[ferredoxin] + 2 S-adenosyl-L-methionine = 2-methyladenosine(37) in tRNA + 5'-deoxyadenosine + L-methionine + 2 oxidized [2Fe-2S]-[ferredoxin] + S-adenosyl-L-homocysteine. Functionally, specifically methylates position 2 of adenine 2503 in 23S rRNA and position 2 of adenine 37 in tRNAs. This is Probable dual-specificity RNA methyltransferase RlmN from Streptococcus thermophilus (strain ATCC BAA-250 / LMG 18311).